We begin with the raw amino-acid sequence, 158 residues long: Ribosome maturation factor RimP (158 aa).

Belongs to the RimP family.

The protein localises to the cytoplasm. Required for maturation of 30S ribosomal subunits. This chain is Ribosome maturation factor RimP, found in Lactobacillus gasseri (strain ATCC 33323 / DSM 20243 / BCRC 14619 / CIP 102991 / JCM 1131 / KCTC 3163 / NCIMB 11718 / NCTC 13722 / AM63).